A 900-amino-acid chain; its full sequence is Minor teichoic acid biosynthesis protein GgaB (900 aa).

This sequence belongs to the glycosyltransferase 2 family.

The protein operates within cell wall biogenesis; poly(glucopyranosyl N-acetylgalactosamine 1-phosphate) teichoic acid biosynthesis. Involved in the biosynthesis of galactosamine-containing minor teichoic acid, a non-essential cell wall polymer in B.subtilis 168. This Bacillus subtilis (strain 168) protein is Minor teichoic acid biosynthesis protein GgaB (ggaB).